A 349-amino-acid chain; its full sequence is Alanine racemase (349 aa).

Catalysis depends on K35, which acts as the Proton acceptor; specific for D-alanine. Residue K35 is modified to N6-(pyridoxal phosphate)lysine. Residue R130 participates in substrate binding. The active-site Proton acceptor; specific for L-alanine is Y244. M292 lines the substrate pocket.

This sequence belongs to the alanine racemase family. It depends on pyridoxal 5'-phosphate as a cofactor.

It carries out the reaction L-alanine = D-alanine. Its pathway is amino-acid biosynthesis; D-alanine biosynthesis; D-alanine from L-alanine: step 1/1. Functionally, catalyzes the interconversion of L-alanine and D-alanine. May also act on other amino acids. The chain is Alanine racemase (alr) from Dinoroseobacter shibae (strain DSM 16493 / NCIMB 14021 / DFL 12).